Reading from the N-terminus, the 535-residue chain is uncharacterized protein (535 aa).

Disordered stretches follow at residues 1-58 (MSMK…PRGP), 211-254 (EPPK…PPCI), 313-353 (RRVA…EQVK), 376-416 (RPDK…DQRL), 421-440 (QGLD…DAAW), and 508-535 (SLFE…SRRD). The segment covering 22-34 (IRRDPWFGGRDNE) has biased composition (basic and acidic residues). An SNW region spans residues 179 to 342 (AQYIRYTPSQ…KARQERSAMR (164 aa)). Positions 376–393 (RPDKADKLRKERERDISE) are enriched in basic and acidic residues. A compositionally biased stretch (basic and acidic residues) spans 511–535 (EHTKEKKRGGDGGDSRGESKRSRRD).

Belongs to the SNW family.

This is an uncharacterized protein from Caenorhabditis elegans.